Here is a 305-residue protein sequence, read N- to C-terminus: uncharacterized protein (305 aa).

The first 29 residues, 1–29, serve as a signal peptide directing secretion; sequence MSKAVSEILGYMYIFGIVMAVLAIVFVQV.

This is an uncharacterized protein from Archaeoglobus fulgidus (strain ATCC 49558 / DSM 4304 / JCM 9628 / NBRC 100126 / VC-16).